The primary structure comprises 219 residues: Multiple organellar RNA editing factor 2, chloroplastic (219 aa).

A chloroplast-targeting transit peptide spans 1 to 48; the sequence is MALPLSGTRHLTRALLSNVTLMAPPRIPSSVHYGGSRLGCSTRFFSIR. Residues 182–219 are disordered; that stretch reads VQRSPERQRRVEPQPQRAQDRPRYNDRTRYSRRRENTR. Over residues 185-219 the composition is skewed to basic and acidic residues; sequence SPERQRRVEPQPQRAQDRPRYNDRTRYSRRRENTR.

It belongs to the MORF family. Homodimer and heterodimer with MORF9. Interacts with protoporphyrinogen oxidase 1 PPOX1. Heterodimers with MORF8/RIP1 and MORF9/RIP9. Interacts with PCMP-A2/PMD1. Interacts with ORRM1. Interacts with ORRM6.

The protein localises to the plastid. It is found in the chloroplast. Its function is as follows. Involved in plastid rRNA processing and consequently in translation and early chloroplast differentiation. Involved in organellar RNA editing. Required for the processing of multiple editing sites in plastids. The sequence is that of Multiple organellar RNA editing factor 2, chloroplastic from Arabidopsis thaliana (Mouse-ear cress).